Consider the following 191-residue polypeptide: Repressor Rok (191 aa).

The stretch at 2–43 (FNEREALRLRLEQLNEAEVKVIREYQIERDKIYAKLRELDRN) forms a coiled coil. A compositionally biased stretch (low complexity) spans 75–96 (SYQPQSQQQSVQPQLQSISSLP). A disordered region spans residues 75–116 (SYQPQSQQQSVQPQLQSISSLPAGIPDGTTRRRRGTARPGSK). Positions 95–191 (LPAGIPDGTT…EIESAESANE (97 aa)) are DNA-binding.

It is found in the cytoplasm. Its subcellular location is the nucleoid. Its function is as follows. Repressor of comK, the master regulator of competence development. Overexpression seems to be lethal. Represses at least 20 genes that specify membrane-localized and secreted proteins, including some that encode products with antibiotic activity. Binds to many AT-rich sites in the chromosome, many of which are known or thought to derive from horizontal gene transfer; helps keep mobile element ICEBs1 quiescent in the genome. Binds to its own promoter and is thus probably autoregulatory. The protein is Repressor Rok of Bacillus subtilis (strain 168).